A 454-amino-acid polypeptide reads, in one-letter code: Bifunctional protein GlmU (454 aa).

Residues 1–228 (MSLKVIILAA…EMEVLGVNNK (228 aa)) form a pyrophosphorylase region. Residues 8–11 (LAAG), Lys22, Gln73, 78–79 (GT), 100–102 (YGD), Gly138, Glu153, Asn168, and Asn226 contribute to the UDP-N-acetyl-alpha-D-glucosamine site. Asp102 lines the Mg(2+) pocket. Mg(2+) is bound at residue Asn226. Residues 229-249 (SQLQSLERQYQAQLAEELMEQ) are linker. An N-acetyltransferase region spans residues 250–454 (GVTVLDASRI…IKGWQKPTKN (205 aa)). Residues Arg332 and Lys350 each contribute to the UDP-N-acetyl-alpha-D-glucosamine site. The Proton acceptor role is filled by His362. UDP-N-acetyl-alpha-D-glucosamine contacts are provided by Tyr365 and Asn376. Acetyl-CoA is bound by residues Ala379, 385-386 (NY), Ser404, Ala422, and Arg439.

The protein in the N-terminal section; belongs to the N-acetylglucosamine-1-phosphate uridyltransferase family. In the C-terminal section; belongs to the transferase hexapeptide repeat family. In terms of assembly, homotrimer. Mg(2+) serves as cofactor.

Its subcellular location is the cytoplasm. It carries out the reaction alpha-D-glucosamine 1-phosphate + acetyl-CoA = N-acetyl-alpha-D-glucosamine 1-phosphate + CoA + H(+). It catalyses the reaction N-acetyl-alpha-D-glucosamine 1-phosphate + UTP + H(+) = UDP-N-acetyl-alpha-D-glucosamine + diphosphate. It participates in nucleotide-sugar biosynthesis; UDP-N-acetyl-alpha-D-glucosamine biosynthesis; N-acetyl-alpha-D-glucosamine 1-phosphate from alpha-D-glucosamine 6-phosphate (route II): step 2/2. Its pathway is nucleotide-sugar biosynthesis; UDP-N-acetyl-alpha-D-glucosamine biosynthesis; UDP-N-acetyl-alpha-D-glucosamine from N-acetyl-alpha-D-glucosamine 1-phosphate: step 1/1. It functions in the pathway bacterial outer membrane biogenesis; LPS lipid A biosynthesis. Catalyzes the last two sequential reactions in the de novo biosynthetic pathway for UDP-N-acetylglucosamine (UDP-GlcNAc). The C-terminal domain catalyzes the transfer of acetyl group from acetyl coenzyme A to glucosamine-1-phosphate (GlcN-1-P) to produce N-acetylglucosamine-1-phosphate (GlcNAc-1-P), which is converted into UDP-GlcNAc by the transfer of uridine 5-monophosphate (from uridine 5-triphosphate), a reaction catalyzed by the N-terminal domain. This Hydrogenovibrio crunogenus (strain DSM 25203 / XCL-2) (Thiomicrospira crunogena) protein is Bifunctional protein GlmU.